A 77-amino-acid chain; its full sequence is Antitoxin VapB2 (77 aa).

The SpoVT-AbrB domain maps to 4–46 (ASVFMTNRSQAVRLPAEVRFSEEIKKLSVRVSGSDRILSPLNQ).

The protein belongs to the VapB family. As to quaternary structure, probably forms a complex with cognate toxin VapC2.

Antitoxin component of a type II toxin-antitoxin (TA) system. Neutralizes the effect of cognate toxin VapC2 but not non-cognate toxin VapC2. The polypeptide is Antitoxin VapB2 (Haemophilus influenzae (strain 86-028NP)).